Reading from the N-terminus, the 175-residue chain is ATP-dependent protease subunit HslV (175 aa).

Residue threonine 2 is part of the active site. Na(+)-binding residues include glycine 158, cysteine 161, and threonine 164.

This sequence belongs to the peptidase T1B family. HslV subfamily. As to quaternary structure, a double ring-shaped homohexamer of HslV is capped on each side by a ring-shaped HslU homohexamer. The assembly of the HslU/HslV complex is dependent on binding of ATP.

Its subcellular location is the cytoplasm. It catalyses the reaction ATP-dependent cleavage of peptide bonds with broad specificity.. Allosterically activated by HslU binding. In terms of biological role, protease subunit of a proteasome-like degradation complex believed to be a general protein degrading machinery. The chain is ATP-dependent protease subunit HslV from Haemophilus influenzae (strain ATCC 51907 / DSM 11121 / KW20 / Rd).